The chain runs to 87 residues: RNA-binding protein Hfq (87 aa).

Positions 9–68 constitute a Sm domain; it reads DPFLNALRRERIPVSIYLVNGIKLQGQIESFDQFVILLKNTVNQMVYKHAISTVVPARPV. Residues 65-87 form a disordered region; the sequence is ARPVSHHSGDRPQGDRPQEKSED. Basic and acidic residues predominate over residues 71-87; sequence HSGDRPQGDRPQEKSED.

It belongs to the Hfq family. Homohexamer.

RNA chaperone that binds small regulatory RNA (sRNAs) and mRNAs to facilitate mRNA translational regulation in response to envelope stress, environmental stress and changes in metabolite concentrations. Also binds with high specificity to tRNAs. The polypeptide is RNA-binding protein Hfq (Vibrio parahaemolyticus serotype O3:K6 (strain RIMD 2210633)).